Consider the following 187-residue polypeptide: uncharacterized protein (187 aa).

The 132-residue stretch at 26-157 (NRHAAVLLPI…YLDVSRRGQQ (132 aa)) folds into the Nudix hydrolase domain. Residues 64–86 (GVADPKDKSIIATALREAEEEVN) carry the Nudix box motif. Residues Glu-80 and Glu-84 each contribute to the Mg(2+) site.

This sequence belongs to the Nudix hydrolase family. PCD1 subfamily. It depends on Mn(2+) as a cofactor. Requires Mg(2+) as cofactor.

Functionally, probably mediates the hydrolysis of some nucleoside diphosphate derivatives. This is an uncharacterized protein from Photorhabdus laumondii subsp. laumondii (strain DSM 15139 / CIP 105565 / TT01) (Photorhabdus luminescens subsp. laumondii).